Here is a 49-residue protein sequence, read N- to C-terminus: uncharacterized protein (49 aa).

The interval 1–49 is disordered; it reads MSNETFEQNEPKPTKVEELQPGDVEAVEDSTPVREITQTDHINKAMLQI. Residues 9–18 show a composition bias toward basic and acidic residues; it reads NEPKPTKVEE.

This is an uncharacterized protein from Dictyostelium discoideum (Social amoeba).